A 494-amino-acid polypeptide reads, in one-letter code: BTB/POZ domain and ankyrin repeat-containing protein NH5.1 (494 aa).

The BTB domain occupies 25-130 (SDVAFSVEGR…LYSGQASVAA (106 aa)). The interval 60–94 (NHQPPPPPPPLNWPMAGGGGGGSGGGGRGGAGGGG) is disordered. Over residues 61–71 (HQPPPPPPPLN) the composition is skewed to pro residues. A compositionally biased stretch (gly residues) spans 75–94 (AGGGGGGSGGGGRGGAGGGG). The C2HC NPR-type zinc-finger motif lies at 136–150 (LPGCGARGCWHTRCG). Cysteine 139, cysteine 144, histidine 146, and cysteine 149 together coordinate Zn(2+). 4 ANK repeats span residues 274 to 302 (NKIR…GLDL), 303 to 333 (DDAL…DVNS), 338 to 367 (TGKT…DPNS), and 371 to 405 (DGVT…KLRL). 2 disordered regions span residues 421-443 (DGAP…PRSD) and 469-494 (AAGE…NGFA).

This sequence belongs to the plant 'ANKYRIN-BTB/POZ' family. 'NOOT-BOP-COCH-like' (NBCL) subfamily. Homodimer. Interacts with TGAL5, TGAL7, TGAL8 and TGAL9.

It is found in the nucleus. Its subcellular location is the cytoplasm. It functions in the pathway protein modification; protein ubiquitination. Its function is as follows. May act as a substrate-specific adapter of an E3 ubiquitin-protein ligase complex (CUL3-RBX1-BTB) which mediates the ubiquitination and subsequent proteasomal degradation of target proteins. Transcriptional co-regulator involved in the promotion of leaf and floral meristem fate and determinacy. Required for the abscission of senescent organs, probably by regulating the cell wall disorganization in abscission zones (AZs, e.g. pulvini at the base of leaves). This chain is BTB/POZ domain and ankyrin repeat-containing protein NH5.1, found in Oryza sativa subsp. japonica (Rice).